The chain runs to 490 residues: Betaine aldehyde dehydrogenase (490 aa).

NAD(+) is bound by residues K174, E177, and 227–232 (GGIETG). Catalysis depends on residues E249 and C283. E384 is a binding site for NAD(+).

It belongs to the aldehyde dehydrogenase family. As to quaternary structure, homodimer.

It catalyses the reaction betaine aldehyde + NAD(+) + H2O = glycine betaine + NADH + 2 H(+). The protein operates within amine and polyamine biosynthesis; betaine biosynthesis via choline pathway; betaine from betaine aldehyde: step 1/1. Its activity is regulated as follows. Activity is stimulated by low concentrations of salts and by moderate concentrations of glycine betaine. Highly tolerant to high ionic conditions. In vitro, activity is highly stimulated in the presence of proline. Its function is as follows. Involved in the biosynthesis of the osmoprotectant glycine betaine from choline. Catalyzes the oxidation of betaine aldehyde to betaine. Shows specificity for betaine aldehyde as substrate. Can use both NAD(+) and NADP(+), but NAD(+) is strongly preferred. This chain is Betaine aldehyde dehydrogenase, found in Bacillus subtilis (strain 168).